The primary structure comprises 260 residues: Proteasome subunit alpha type-1 (260 aa).

Residues 231-260 (FLEGLEERPQRKPALPADEPAEKAEEPMEH) form a disordered region. Over residues 250 to 260 (PAEKAEEPMEH) the composition is skewed to basic and acidic residues.

The protein belongs to the peptidase T1A family. In terms of assembly, the 26S proteasome consists of a 20S proteasome core and two 19S regulatory subunits. The 20S proteasome core is a barrel-shaped complex made of 28 subunits that are arranged in four stacked rings. The two outer rings are each formed by seven alpha subunits, and the two inner rings are formed by seven beta subunits. The proteolytic activity is exerted by three beta-subunits PSMB5, PSMB6 and PSMB7.

The protein resides in the cytoplasm. Its subcellular location is the nucleus. In terms of biological role, component of the 20S core proteasome complex involved in the proteolytic degradation of most intracellular proteins. This complex plays numerous essential roles within the cell by associating with different regulatory particles. Associated with two 19S regulatory particles, forms the 26S proteasome and thus participates in the ATP-dependent degradation of ubiquitinated proteins. The 26S proteasome plays a key role in the maintenance of protein homeostasis by removing misfolded or damaged proteins that could impair cellular functions, and by removing proteins whose functions are no longer required. Associated with the PA200 or PA28, the 20S proteasome mediates ubiquitin-independent protein degradation. This type of proteolysis is required in several pathways including spermatogenesis (20S-PA200 complex) or generation of a subset of MHC class I-presented antigenic peptides (20S-PA28 complex). This Gallus gallus (Chicken) protein is Proteasome subunit alpha type-1 (PSMA1).